Here is a 424-residue protein sequence, read N- to C-terminus: Histidine--tRNA ligase (424 aa).

It belongs to the class-II aminoacyl-tRNA synthetase family. In terms of assembly, homodimer.

The protein localises to the cytoplasm. It catalyses the reaction tRNA(His) + L-histidine + ATP = L-histidyl-tRNA(His) + AMP + diphosphate + H(+). The protein is Histidine--tRNA ligase of Sodalis glossinidius (strain morsitans).